The chain runs to 63 residues: Large ribosomal subunit protein uL30 (63 aa).

Belongs to the universal ribosomal protein uL30 family. In terms of assembly, part of the 50S ribosomal subunit.

This Stenotrophomonas maltophilia (strain K279a) protein is Large ribosomal subunit protein uL30.